The following is a 76-amino-acid chain: Small ribosomal subunit protein bS18 (76 aa).

Belongs to the bacterial ribosomal protein bS18 family. In terms of assembly, part of the 30S ribosomal subunit. Forms a tight heterodimer with protein bS6.

Functionally, binds as a heterodimer with protein bS6 to the central domain of the 16S rRNA, where it helps stabilize the platform of the 30S subunit. This is Small ribosomal subunit protein bS18 from Mesoplasma florum (strain ATCC 33453 / NBRC 100688 / NCTC 11704 / L1) (Acholeplasma florum).